Here is a 306-residue protein sequence, read N- to C-terminus: Ornithine carbamoyltransferase (306 aa).

Carbamoyl phosphate-binding positions include 53–56, Gln-80, Arg-104, and 131–134; these read STRT and HPCQ. L-ornithine-binding positions include Asn-162, Asp-220, and 224 to 225; that span reads SM. Residues 260–261 and Arg-288 each bind carbamoyl phosphate; that span reads CL.

It belongs to the aspartate/ornithine carbamoyltransferase superfamily. OTCase family.

Its subcellular location is the cytoplasm. It carries out the reaction carbamoyl phosphate + L-ornithine = L-citrulline + phosphate + H(+). It functions in the pathway amino-acid biosynthesis; L-arginine biosynthesis; L-arginine from L-ornithine and carbamoyl phosphate: step 1/3. Its function is as follows. Reversibly catalyzes the transfer of the carbamoyl group from carbamoyl phosphate (CP) to the N(epsilon) atom of ornithine (ORN) to produce L-citrulline. This is Ornithine carbamoyltransferase from Dechloromonas aromatica (strain RCB).